The following is a 496-amino-acid chain: Cytochrome P450 71A15 (496 aa).

The chain crosses the membrane as a helical span at residues 3-23 (IIIISLCLATILAFLLLKPLL). Cys439 serves as a coordination point for heme.

This sequence belongs to the cytochrome P450 family. Requires heme as cofactor.

The protein localises to the membrane. This is Cytochrome P450 71A15 (CYP71A15) from Arabidopsis thaliana (Mouse-ear cress).